Consider the following 545-residue polypeptide: Chaperonin GroEL (545 aa).

ATP is bound by residues 29 to 32 (TLGP), 86 to 90 (DGTTT), Gly-413, 476 to 478 (NAA), and Asp-492.

It belongs to the chaperonin (HSP60) family. Forms a cylinder of 14 subunits composed of two heptameric rings stacked back-to-back. Interacts with the co-chaperonin GroES.

It is found in the cytoplasm. The catalysed reaction is ATP + H2O + a folded polypeptide = ADP + phosphate + an unfolded polypeptide.. Together with its co-chaperonin GroES, plays an essential role in assisting protein folding. The GroEL-GroES system forms a nano-cage that allows encapsulation of the non-native substrate proteins and provides a physical environment optimized to promote and accelerate protein folding. This is Chaperonin GroEL from Oceanobacillus iheyensis (strain DSM 14371 / CIP 107618 / JCM 11309 / KCTC 3954 / HTE831).